The primary structure comprises 258 residues: Tryptophan synthase alpha chain (258 aa).

Active-site proton acceptor residues include E52 and D63.

It belongs to the TrpA family. As to quaternary structure, tetramer of two alpha and two beta chains.

It catalyses the reaction (1S,2R)-1-C-(indol-3-yl)glycerol 3-phosphate + L-serine = D-glyceraldehyde 3-phosphate + L-tryptophan + H2O. It participates in amino-acid biosynthesis; L-tryptophan biosynthesis; L-tryptophan from chorismate: step 5/5. In terms of biological role, the alpha subunit is responsible for the aldol cleavage of indoleglycerol phosphate to indole and glyceraldehyde 3-phosphate. The sequence is that of Tryptophan synthase alpha chain from Streptococcus pneumoniae serotype 2 (strain D39 / NCTC 7466).